Here is a 151-residue protein sequence, read N- to C-terminus: Deoxyuridine 5'-triphosphate nucleotidohydrolase (151 aa).

Residues 70 to 72 (RSG), asparagine 83, 87 to 89 (LID), and methionine 97 contribute to the substrate site.

This sequence belongs to the dUTPase family. As to quaternary structure, homotrimer. It depends on Mg(2+) as a cofactor.

The catalysed reaction is dUTP + H2O = dUMP + diphosphate + H(+). Its pathway is pyrimidine metabolism; dUMP biosynthesis; dUMP from dCTP (dUTP route): step 2/2. Functionally, this enzyme is involved in nucleotide metabolism: it produces dUMP, the immediate precursor of thymidine nucleotides and it decreases the intracellular concentration of dUTP so that uracil cannot be incorporated into DNA. The sequence is that of Deoxyuridine 5'-triphosphate nucleotidohydrolase from Escherichia coli O7:K1 (strain IAI39 / ExPEC).